A 277-amino-acid polypeptide reads, in one-letter code: (-)-trans-carveol dehydrogenase (277 aa).

10-32 lines the NAD(+) pocket; that stretch reads LITGAARGQGRSHAIKLAEEGAD. S156 is a binding site for substrate. Y169 serves as the catalytic Proton acceptor.

This sequence belongs to the short-chain dehydrogenases/reductases (SDR) family. Homotetramer.

It carries out the reaction (1S,5R)-carveol + NAD(+) = (R)-carvone + NADH + H(+). It catalyses the reaction (1S,5S)-carveol + NAD(+) = (S)-carvone + NADH + H(+). The protein operates within terpene metabolism; limonene degradation. With respect to regulation, competitively inhibited by the product (S)- or (R)-carvone. Its function is as follows. Catalyzes the oxidation of carveol to carvone, with a strong stereoselectivity since it efficiently converts only the (6S)-stereoisomers, of which (-)-(4R,6S)-trans-carveol is the better substrate. Displays a broad substrate specificity with a preference for substituted cyclohexanols, and does not catalyze the oxidation of primary or short chain aliphatic secondary alcohols. Is also able, albeit more slowly, to oxidize limonene-1,2-diol into 1-hydroxy-2-oxolimonene. The sequence is that of (-)-trans-carveol dehydrogenase (limC) from Rhodococcus erythropolis (Arthrobacter picolinophilus).